The primary structure comprises 190 residues: B3 domain-containing protein At1g49475 (190 aa).

The tract at residues 1 to 27 (MRNMHTNRRSPGPITSAATQRRLKPEP) is disordered. A DNA-binding region (TF-B3) is located at residues 33-125 (KFIKIILLSR…CFRVVIFDVS (93 aa)).

The protein resides in the nucleus. This Arabidopsis thaliana (Mouse-ear cress) protein is B3 domain-containing protein At1g49475.